Here is a 2642-residue protein sequence, read N- to C-terminus: Fusarielin synthase FSL1 (2642 aa).

The region spanning 6–450 is the Ketosynthase family 3 (KS3) domain; it reads NEPIAIIGTG…GTNAHAILEA (445 aa). Residues Cys-179, His-318, and His-370 each act as for beta-ketoacyl synthase activity in the active site. Residues 566–890 are malonyl-CoA:ACP transacylase (MAT) domain; sequence VFTGQGAQWA…PYTSALVRGK (325 aa). Ser-659 (for malonyltransferase activity) is an active-site residue. The segment at 965-1101 is N-terminal hotdog fold; that stretch reads HDLLGIQTAD…GKVCIFLQTE (137 aa). A dehydratase (DH) domain region spans residues 965 to 1279; sequence HDLLGIQTAD…SFSPFAAATD (315 aa). In terms of domain architecture, PKS/mFAS DH spans 965–1280; the sequence is HDLLGIQTAD…FSPFAAATDR (316 aa). His-997 functions as the Proton acceptor; for dehydratase activity in the catalytic mechanism. The segment at 1126–1280 is C-terminal hotdog fold; it reads MAGIDVERFY…FSPFAAATDR (155 aa). Asp-1189 functions as the Proton donor; for dehydratase activity in the catalytic mechanism. A methyltransferase (MET) domain region spans residues 1423–1622; the sequence is NYLDRYYTHA…GVDTNTPMPD (200 aa). The interval 2244–2423 is ketoreductase (KR) domain; that stretch reads TYWMLGLTGD…GHNAAVIDIS (180 aa). A Carrier domain is found at 2556–2635; the sequence is QEVTSVLTSC…DLADYILESL (80 aa). The residue at position 2595 (Ser-2595) is an O-(pantetheine 4'-phosphoryl)serine.

The cofactor is pantetheine 4'-phosphate.

Its pathway is secondary metabolite biosynthesis. Its function is as follows. Reducing polyketide synthase; part of the gene cluster that mediates the biosynthesis of fusarielins F, G and H, decaketide compounds with 5 methylations and a decaline core that act as mycoestrogens as they stimulate growth of MCF-7 breast cancer cells. The initial compound in the pathway is produced by the reducing polyketide synthase FSL1. FSL1 lacks an active enoyl reductase (ER) domain and biosynthesis of fusarielins relies on the trans-acting enoyl reductase FSL5, before it is released through hydrolysis catalyzed by the thioesterase FSL2. Fusarielins F, G, and H have a C11=C12 cis double bond and is fully reduced between C10 and C11 and between C12 and C13. FSL3 can be involved in the formation of the C11=C12 cis double bond by moving a hypothetical C10=C11 or C12=C13 trans double bond to form prefusarielin. Prefusarielin is oxygenated at C15 and C16 by the cytochrome P450 monooxygenase FSL4, resulting in fusarielin F, which subsequently is epoxidized into fusarielin G by the same enzyme. The final step in the pathway is a reduction of the carboxylic acid moiety to yield fusarielin H via a still undetermined mechanism. This is Fusarielin synthase FSL1 from Gibberella zeae (strain ATCC MYA-4620 / CBS 123657 / FGSC 9075 / NRRL 31084 / PH-1) (Wheat head blight fungus).